The following is a 242-amino-acid chain: uncharacterized protein (242 aa).

The N-terminal stretch at 1-20 (MTFIKGLPLMLLTISLGCNA) is a signal peptide.

Belongs to the periplasmic pilus chaperone family.

It localises to the periplasm. Its function is as follows. Could be required for the biogenesis of the putative YbgD fimbria. This is an uncharacterized protein from Escherichia coli (strain K12).